The following is a 37-amino-acid chain: Esculentin-2L (37 aa).

A disulfide bridge connects residues cysteine 31 and cysteine 37.

Expressed by the skin glands.

Its subcellular location is the secreted. Antibacterial activity against Gram-positive bacterium S.aureus and Gram-negative bacterium E.coli. Has activity against C.albicans. This is Esculentin-2L from Rana luteiventris (Columbia spotted frog).